The chain runs to 83 residues: Small ribosomal subunit protein uS17 (83 aa).

Belongs to the universal ribosomal protein uS17 family. In terms of assembly, part of the 30S ribosomal subunit.

Its function is as follows. One of the primary rRNA binding proteins, it binds specifically to the 5'-end of 16S ribosomal RNA. This Buchnera aphidicola subsp. Acyrthosiphon pisum (strain 5A) protein is Small ribosomal subunit protein uS17.